A 409-amino-acid chain; its full sequence is Arginine deiminase (409 aa).

The active-site Amidino-cysteine intermediate is cysteine 399.

It belongs to the arginine deiminase family.

The protein localises to the cytoplasm. It catalyses the reaction L-arginine + H2O = L-citrulline + NH4(+). It functions in the pathway amino-acid degradation; L-arginine degradation via ADI pathway; carbamoyl phosphate from L-arginine: step 1/2. The sequence is that of Arginine deiminase from Streptococcus pneumoniae (strain P1031).